Reading from the N-terminus, the 525-residue chain is Cytochrome P450 4V2 (525 aa).

The helical transmembrane segment at 13–33 threads the bilayer; that stretch reads LLLWGAASAVSLAGASLVLSL. 2 residues coordinate heme: Glu-329 and Cys-467.

It belongs to the cytochrome P450 family. Heme serves as cofactor.

The protein resides in the endoplasmic reticulum membrane. The enzyme catalyses dodecanoate + reduced [NADPH--hemoprotein reductase] + O2 = 12-hydroxydodecanoate + oxidized [NADPH--hemoprotein reductase] + H2O + H(+). The catalysed reaction is tetradecanoate + reduced [NADPH--hemoprotein reductase] + O2 = 14-hydroxytetradecanoate + oxidized [NADPH--hemoprotein reductase] + H2O + H(+). It catalyses the reaction hexadecanoate + reduced [NADPH--hemoprotein reductase] + O2 = 16-hydroxyhexadecanoate + oxidized [NADPH--hemoprotein reductase] + H2O + H(+). It carries out the reaction (5Z,8Z,11Z,14Z,17Z)-eicosapentaenoate + reduced [NADPH--hemoprotein reductase] + O2 = 20-hydroxy-(5Z,8Z,11Z,14Z,17Z)-eicosapentaenoate + oxidized [NADPH--hemoprotein reductase] + H2O + H(+). The enzyme catalyses (4Z,7Z,10Z,13Z,16Z,19Z)-docosahexaenoate + reduced [NADPH--hemoprotein reductase] + O2 = 22-hydroxy-(4Z,7Z,10Z,13Z,16Z,19Z)-docosahexaenoate + oxidized [NADPH--hemoprotein reductase] + H2O + H(+). Its pathway is lipid metabolism; fatty acid metabolism. Its activity is regulated as follows. Inhibited by N-hydroxy-N'-(4-n-butyl-2-methylphenyl formamidine)(HET0016) with an IC(50) of 38 nM. Functionally, a cytochrome P450 monooxygenase involved in fatty acid metabolism in the eye. Catalyzes the omega-hydroxylation of polyunsaturated fatty acids (PUFAs) docosahexaenoate (DHA) and its precursor eicosapentaenoate (EPA), and may contribute to the homeostasis of these retinal PUFAs. Omega hydroxylates saturated fatty acids such as laurate, myristate and palmitate, the catalytic efficiency decreasing in the following order: myristate &gt; laurate &gt; palmitate (C14&gt;C12&gt;C16). Mechanistically, uses molecular oxygen inserting one oxygen atom into a substrate, and reducing the second into a water molecule, with two electrons provided by NADPH via cytochrome P450 reductase (CPR; NADPH-ferrihemoprotein reductase). The protein is Cytochrome P450 4V2 (CYP4V2) of Pongo abelii (Sumatran orangutan).